Consider the following 261-residue polypeptide: Chitinase 8 (261 aa).

An N-terminal signal peptide occupies residues 1–29 (MTTTTTRFVQLAACAAASLLAVAASGAAA). 2 disulfides stabilise this stretch: cysteine 53-cysteine 115 and cysteine 221-cysteine 253. The Proton donor role is filled by glutamate 98.

It belongs to the glycosyl hydrolase 19 family. Chitinase class II subfamily. In terms of tissue distribution, expressed in roots, leaves, sheaths and meristems.

The enzyme catalyses Random endo-hydrolysis of N-acetyl-beta-D-glucosaminide (1-&gt;4)-beta-linkages in chitin and chitodextrins.. The sequence is that of Chitinase 8 (Cht8) from Oryza sativa subsp. japonica (Rice).